We begin with the raw amino-acid sequence, 223 residues long: Guanylate kinase (223 aa).

The Guanylate kinase-like domain maps to 6-183 (GRLFVMTGAS…AVADFLAILT (178 aa)). 13-20 (GASGVGKG) is an ATP binding site.

The protein belongs to the guanylate kinase family.

Its subcellular location is the cytoplasm. It carries out the reaction GMP + ATP = GDP + ADP. Essential for recycling GMP and indirectly, cGMP. This is Guanylate kinase from Thermus thermophilus (strain ATCC 27634 / DSM 579 / HB8).